The chain runs to 368 residues: Transcription factor TGA1 (368 aa).

Over residues Leu53–Thr65 the composition is skewed to polar residues. The tract at residues Leu53–Asp83 is disordered. Residues Pro82–Phe145 form the bZIP domain. Coiled-coil stretches lie at residues Asp83 to Gly131 and Asn261 to Gln281. The basic motif stretch occupies residues Lys84–Lys104. A leucine-zipper region spans residues Leu110–Leu124. Positions Ile153 to Arg363 constitute a DOG1 domain. Residues Cys260 and Cys266 are joined by a disulfide bond.

The protein belongs to the bZIP family. As to quaternary structure, binds DNA as a dimer. The reduced form interacts with NPR1. Predominantly expressed in roots.

The protein resides in the nucleus. Its function is as follows. Transcriptional activator that binds specifically to the DNA sequence 5'-TGACG-3'. Recognizes ocs elements like the as-1 motif of the cauliflower mosaic virus 35S promoter. Binding to the as-1-like cis elements mediate auxin- and salicylic acid-inducible transcription. May be involved in the induction of the systemic acquired resistance (SAR) via its interaction with NPR1. Could also bind to the Hex-motif (5'-TGACGTGG-3') another cis-acting element found in plant histone promoters. This Arabidopsis thaliana (Mouse-ear cress) protein is Transcription factor TGA1 (TGA1).